Consider the following 588-residue polypeptide: Tripartite motif-containing protein 29 (588 aa).

Residues M1–R66 form a disordered region. Phosphoserine is present on residues S21, S28, S58, and S104. The residue at position 106 (Y106) is a Phosphotyrosine. The B box-type zinc-finger motif lies at F220–V260. Zn(2+) is bound by residues C225, H228, C247, and H252. A coiled-coil region spans residues T259–E352. Phosphothreonine is present on T476. S489 carries the post-translational modification Phosphoserine.

Interacts with VIM and HINT1. Interacts with IKBKG/NEMO. Interacts with STING1. In terms of processing, constitutively phosphorylated by PKC on serine/threonine in A431 cells. Expressed in placenta, prostate and thymus.

Its subcellular location is the cytoplasm. It localises to the lysosome. Its function is as follows. Plays a crucial role in the regulation of macrophage activation in response to viral or bacterial infections within the respiratory tract. Mechanistically, TRIM29 interacts with IKBKG/NEMO in the lysosome where it induces its 'Lys-48' ubiquitination and subsequent degradation. In turn, the expression of type I interferons and the production of pro-inflammatory cytokines are inhibited. Additionally, induces the 'Lys-48' ubiquitination of STING1 in a similar way, leading to its degradation. The sequence is that of Tripartite motif-containing protein 29 (TRIM29) from Homo sapiens (Human).